A 177-amino-acid chain; its full sequence is Secretion monitor (177 aa).

An N-terminal signal peptide occupies residues 1 to 37; sequence MIGILNRWRQFGRRYFWPHLLLGMVAASLGVPLNLSG.

It belongs to the SecM family.

Its subcellular location is the cytoplasm. The protein resides in the cytosol. It is found in the periplasm. In terms of biological role, regulates secA expression by translational coupling of the secM secA operon. Translational pausing at a specific Pro residue 5 residues before the end of the protein may allow disruption of a mRNA repressor helix that normally suppresses secA translation initiation. The protein is Secretion monitor of Yersinia pestis bv. Antiqua (strain Antiqua).